The sequence spans 267 residues: Translation initiation factor 2 subunit alpha (267 aa).

One can recognise an S1 motif domain in the interval 12 to 83; that stretch reads GEIVMATVER…KRKYANLSLR (72 aa).

It belongs to the eIF-2-alpha family. As to quaternary structure, heterotrimer composed of an alpha, a beta and a gamma chain.

In terms of biological role, eIF-2 functions in the early steps of protein synthesis by forming a ternary complex with GTP and initiator tRNA. This chain is Translation initiation factor 2 subunit alpha, found in Methanopyrus kandleri (strain AV19 / DSM 6324 / JCM 9639 / NBRC 100938).